Consider the following 477-residue polypeptide: Bifunctional protein HldE (477 aa).

A ribokinase region spans residues 1–318 (MKVTLPEFER…ENAVRGRADT (318 aa)). An N6-acetyllysine modification is found at K179. 195-198 (NLSE) contributes to the ATP binding site. Residue D264 is part of the active site. Residues 344 to 477 (MTNGVFDILH…IKKIQQDKKG (134 aa)) are cytidylyltransferase.

In the N-terminal section; belongs to the carbohydrate kinase PfkB family. It in the C-terminal section; belongs to the cytidylyltransferase family. In terms of assembly, homodimer.

The catalysed reaction is D-glycero-beta-D-manno-heptose 7-phosphate + ATP = D-glycero-beta-D-manno-heptose 1,7-bisphosphate + ADP + H(+). The enzyme catalyses D-glycero-beta-D-manno-heptose 1-phosphate + ATP + H(+) = ADP-D-glycero-beta-D-manno-heptose + diphosphate. The protein operates within nucleotide-sugar biosynthesis; ADP-L-glycero-beta-D-manno-heptose biosynthesis; ADP-L-glycero-beta-D-manno-heptose from D-glycero-beta-D-manno-heptose 7-phosphate: step 1/4. It participates in nucleotide-sugar biosynthesis; ADP-L-glycero-beta-D-manno-heptose biosynthesis; ADP-L-glycero-beta-D-manno-heptose from D-glycero-beta-D-manno-heptose 7-phosphate: step 3/4. It functions in the pathway bacterial outer membrane biogenesis; LPS core biosynthesis. Its function is as follows. Catalyzes the phosphorylation of D-glycero-D-manno-heptose 7-phosphate at the C-1 position to selectively form D-glycero-beta-D-manno-heptose-1,7-bisphosphate. Functionally, catalyzes the ADP transfer from ATP to D-glycero-beta-D-manno-heptose 1-phosphate, yielding ADP-D-glycero-beta-D-manno-heptose. The polypeptide is Bifunctional protein HldE (Escherichia coli O157:H7).